Consider the following 387-residue polypeptide: 1-deoxy-D-xylulose 5-phosphate reductoisomerase (387 aa).

Residues Thr10, Gly11, Ser12, Ile13, Gly36, Asn38, and Asn122 each contribute to the NADPH site. Residue Lys123 coordinates 1-deoxy-D-xylulose 5-phosphate. Glu124 contributes to the NADPH binding site. Mn(2+) is bound at residue Asp148. 1-deoxy-D-xylulose 5-phosphate contacts are provided by Ser149, Glu150, Ser174, and His197. Glu150 is a Mn(2+) binding site. Gly203 lines the NADPH pocket. The 1-deoxy-D-xylulose 5-phosphate site is built by Ser210, Asn215, Lys216, and Glu219. Glu219 is a binding site for Mn(2+).

It belongs to the DXR family. Requires Mg(2+) as cofactor. Mn(2+) is required as a cofactor.

It catalyses the reaction 2-C-methyl-D-erythritol 4-phosphate + NADP(+) = 1-deoxy-D-xylulose 5-phosphate + NADPH + H(+). It functions in the pathway isoprenoid biosynthesis; isopentenyl diphosphate biosynthesis via DXP pathway; isopentenyl diphosphate from 1-deoxy-D-xylulose 5-phosphate: step 1/6. In terms of biological role, catalyzes the NADPH-dependent rearrangement and reduction of 1-deoxy-D-xylulose-5-phosphate (DXP) to 2-C-methyl-D-erythritol 4-phosphate (MEP). The chain is 1-deoxy-D-xylulose 5-phosphate reductoisomerase from Chloroherpeton thalassium (strain ATCC 35110 / GB-78).